Consider the following 180-residue polypeptide: Acireductone dioxygenase (180 aa).

4 residues coordinate Fe(2+): His-97, His-99, Glu-103, and His-141. 4 residues coordinate Ni(2+): His-97, His-99, Glu-103, and His-141.

It belongs to the acireductone dioxygenase (ARD) family. As to quaternary structure, monomer. The cofactor is Fe(2+). Ni(2+) is required as a cofactor.

The enzyme catalyses 1,2-dihydroxy-5-(methylsulfanyl)pent-1-en-3-one + O2 = 3-(methylsulfanyl)propanoate + CO + formate + 2 H(+). It catalyses the reaction 1,2-dihydroxy-5-(methylsulfanyl)pent-1-en-3-one + O2 = 4-methylsulfanyl-2-oxobutanoate + formate + 2 H(+). Its pathway is amino-acid biosynthesis; L-methionine biosynthesis via salvage pathway; L-methionine from S-methyl-5-thio-alpha-D-ribose 1-phosphate: step 5/6. Catalyzes 2 different reactions between oxygen and the acireductone 1,2-dihydroxy-3-keto-5-methylthiopentene (DHK-MTPene) depending upon the metal bound in the active site. Fe-containing acireductone dioxygenase (Fe-ARD) produces formate and 2-keto-4-methylthiobutyrate (KMTB), the alpha-ketoacid precursor of methionine in the methionine recycle pathway. Ni-containing acireductone dioxygenase (Ni-ARD) produces methylthiopropionate, carbon monoxide and formate, and does not lie on the methionine recycle pathway. The protein is Acireductone dioxygenase of Serratia proteamaculans (strain 568).